The chain runs to 797 residues: Protocadherin beta-9 (797 aa).

The N-terminal stretch at 1–26 (MKTRGFSFPRQRQVLFLFLFWGVSLA) is a signal peptide. The Extracellular segment spans residues 27–690 (GSGFGRYSVT…AQADSLTVYL (664 aa)). 5 consecutive Cadherin domains span residues 35–133 (VTEE…SPVF), 138–242 (MVLK…APQF), 247–347 (YETQ…PPEL), 352–451 (LSNS…APAF), and 456–561 (YTLF…SPFV). N169 is a glycosylation site (N-linked (GlcNAc...) asparagine). Residue N418 is glycosylated (N-linked (GlcNAc...) asparagine). N567 is a glycosylation site (N-linked (GlcNAc...) asparagine). In terms of domain architecture, Cadherin 6 spans 568-671 (GSAPCTELVP…LVDGFSQPYL (104 aa)). Residues 691–711 (VVALASVSSLFLLSVLLFVAV) form a helical membrane-spanning segment. The Cytoplasmic segment spans residues 712 to 797 (RLCRRSRAAS…TLHNSFGFNY (86 aa)).

The protein resides in the cell membrane. In terms of biological role, potential calcium-dependent cell-adhesion protein. May be involved in the establishment and maintenance of specific neuronal connections in the brain. This Pan troglodytes (Chimpanzee) protein is Protocadherin beta-9 (PCDHB9).